We begin with the raw amino-acid sequence, 96 residues long: Co-chaperonin GroES (96 aa).

This sequence belongs to the GroES chaperonin family. As to quaternary structure, heptamer of 7 subunits arranged in a ring. Interacts with the chaperonin GroEL.

Its subcellular location is the cytoplasm. In terms of biological role, together with the chaperonin GroEL, plays an essential role in assisting protein folding. The GroEL-GroES system forms a nano-cage that allows encapsulation of the non-native substrate proteins and provides a physical environment optimized to promote and accelerate protein folding. GroES binds to the apical surface of the GroEL ring, thereby capping the opening of the GroEL channel. The polypeptide is Co-chaperonin GroES (Herminiimonas arsenicoxydans).